A 482-amino-acid polypeptide reads, in one-letter code: FAD-linked oxidoreductase alt4 (482 aa).

An FAD-binding PCMH-type domain is found at 53-211 (ERPTYLAIVD…LEATFQVYPQ (159 aa)).

The protein belongs to the oxygen-dependent FAD-linked oxidoreductase family. FAD is required as a cofactor.

It functions in the pathway secondary metabolite biosynthesis. In terms of biological role, FAD-linked oxidoreductase; part of the gene cluster that mediates the biosynthesis of alternapyrone derivatives. Alternapyrone is a decaketide with octa-methylation from methionine on every C2 unit except the third unit. All the domains in the polyketide synthase alt5 are apparently involved in alternapyrone synthesis, that is, the 8 CMeT, 7 KR, 7 DH, and 4 ER reactions in the 9 KS-mediated condensation steps required for alternapyrone synthesis. the alternapyrone produced by alt5 might be intensively modified by cytochrome P450 monooxygenases alt1, alt2 and alt3 and FAD-dependent oxidoreductase alt4 present in the alt gene cluster. This chain is FAD-linked oxidoreductase alt4, found in Alternaria solani.